Consider the following 337-residue polypeptide: MSNGYEDHMDDVCRDDIGRTNLIVNYLPQNMTQDELRSLFSSIGEVESAKLIRDKVAGFEMRSSSLSKGHSLGYGFVNYLNAKDAERAINTLNGLRLQSKTIKVSFARPSSESIKDANLYISGLPRTMTQKDVEDMFLPFGHIINSRVLVDQATGLSRGVAFIRFDKRSEAEEAIASFNGHKPPGSSEPITVKFAANPNQNKNVALLSQICHSPARRFGGPVHHQAQRFRFSPMGVDHMSSISSVNVASSATSGWCIFVYNLGQDADEGILWQMFGPFGAVTNVKVIRDFNTNKCKGFGFVTMTNYEEAAMAIASLNGYRLGDKTLQVSFKTSKSHK.

3 RRM domains span residues 20 to 109, 117 to 197, and 255 to 333; these read TNLI…FARP, ANLY…FAAN, and WCIF…FKTS.

This sequence belongs to the RRM elav family. Interacts (via RRM3) with cirbp. Unable to form oligomers. Part of a ribonucleoprotein (RNP) complex, at least composed of elavl1/elrA and/or elavl2/elrB, igf2bp3/vg1RBP, ddx6/Xp54, ybx2/frgy2, lsm14b/rap55b and, in a subset of RNP complexes, stau1/staufen. In terms of tissue distribution, ubiquitously expressed in adults.

It localises to the cytoplasm. The protein localises to the cell cortex. Functionally, RNA-binding protein that binds to the 3'-UTR region of mRNAs and increases their stability. Involved in embryonic stem cells (ESCs) differentiation: preferentially binds mRNAs that are not methylated by N6-methyladenosine (m6A), stabilizing them, promoting ESCs differentiation. Binds to poly-U elements and AU-rich elements (AREs) in the 3'-UTR of target mRNAs. May be involved in cytoplasmic mRNA polyadenylation. Acts cooperatively with cribp to stabilize AU-rich sequence (ARE)-containing mRNAs. May play a role during gastrulation. Required for the vegetal localization of vg1 mRNA. The sequence is that of ELAV-like protein 1-A (elavl1-a) from Xenopus laevis (African clawed frog).